The sequence spans 806 residues: MRFKEVGLLFCQLLAVLIFAAGFFPQKKVLKGDAQFQYMAETQRALEPAFDKLVLVVIDALRADFLFQQNVSHFDFVHELLNRGEAWGFTAYSNPPTVTLPRLKGITTGSAPNFLDAILNVAEDDSSSNLKDQDSWISQFAKHGKKIHFFGDDTWLKLFPEEFFQKHDGTNSFFVSDFEEVDTNVTRHLPHELQHKDWDVLILHYLGLDHIGHKGGAASQFMPPKHREMDAVIRQIYDQVDNRTLLCVMGDHGMNDLGNHGGSSAGETSAGMVFISKMLSSYPRPAAQDGVSSPVTAAEDYQFFTRIQQVDFVPTIASLFNIPIPKNSLGVFVREFSSLLGQHATTKIIENYHQLMQLAAKKTAARGNDDIDSMLAEMKDVQATLARTATNYNYAMLFLGVGMLSIVTAATAYCYISSARLNEASVLMIAVTALLGSSVFGSSFVEEEHQIWWWIIIAVVGYSWATRPSCTPSHLVFLVCARLLRGWNNSGQKFMYDFTVAELLKSHPSIKWLLVCATLAVVALDGFTERPLLSIFNLLAGLLCFVYKTCWANVNGEVSPTYAQTLVTKACSLLFAGGTPWDDKQLLVPLARLFFKVTAAIVCMRIAYNVVFAKRKFLSELFPLFTIVLIMQTASQNIPLFLVFTIMRSSLRNILRVGYPQQRCEMFFVLSLILQNLSFFQFGGTNSIATIDLTNSYNGISENYNIYVVGLLMCIGNMAPAIYWSLAAVVDHQLYSKKSYAQQKLSSMFFYSVNSLLLLVACICMRYHLFIWSVFSPKLCYLLGWNILIHFLTETVLEPFLLMVAG.

3 N-linked (GlcNAc...) asparagine glycosylation sites follow: Asn70, Asn184, and Asn242. The next 3 membrane-spanning stretches (helical) occupy residues 396–416 (MLFL…YCYI), 425–445 (SVLM…SSFV), and 451–471 (IWWW…PSCT). N-linked (GlcNAc...) asparagine glycosylation occurs at Asn488. Transmembrane regions (helical) follow at residues 508 to 528 (PSIK…DGFT), 532 to 552 (LLSI…TCWA), 593 to 613 (LFFK…VVFA), 624 to 644 (LFTI…FLVF), 664 to 684 (CEMF…QFGG), 706 to 726 (IYVV…YWSL), 745 to 765 (LSSM…CICM), and 782 to 804 (LLGW…LLMV).

Belongs to the PIGG/PIGN/PIGO family. PIGG subfamily.

The protein localises to the endoplasmic reticulum membrane. It functions in the pathway glycolipid biosynthesis; glycosylphosphatidylinositol-anchor biosynthesis. Its function is as follows. Ethanolamine phosphate transferase involved in glycosylphosphatidylinositol-anchor biosynthesis. Transfers ethanolamine phosphate to the GPI second mannose. The protein is GPI ethanolamine phosphate transferase 2 (LAS21) of Eremothecium gossypii (strain ATCC 10895 / CBS 109.51 / FGSC 9923 / NRRL Y-1056) (Yeast).